Consider the following 326-residue polypeptide: MKAPVRVAVTGAAGQIGYSLLFRIAAGEMLGKDQPVTLQLLEIPQAQEALQGTVMELEDCAFPLVDGIIATDSAEEAFRDADYVLLVGAKPRGPGMERKDLLEANAAIFSAQGQALNAVAKRDVKVLAVGNPANTNALITQRNAPDLDPRNFTAMTRLDHNRALAQLSNKVGCHSTEIRGLAVWGNHSATQYPDISHCTIQGRPAADQVEHAWVKDTFIPTVQQRGAAIIKARGASSAASAASAAIDHMRDWALGTPEGEWTSMAVPSDGSYGIEAGLIYSFPVTCRGGDYKIVSGLSVDDFSRARMDQTAAELAEERDAVAHLLP.

Position 11–17 (Gly-11–Gly-17) interacts with NAD(+). Substrate is bound by residues Arg-92 and Arg-98. NAD(+) contacts are provided by residues Asn-105, Gln-112, and Val-129–Asn-131. Substrate is bound by residues Asn-131 and Arg-162. Residue His-187 is the Proton acceptor of the active site.

This sequence belongs to the LDH/MDH superfamily. MDH type 2 family.

The enzyme catalyses (S)-malate + NAD(+) = oxaloacetate + NADH + H(+). Its function is as follows. Catalyzes the reversible oxidation of malate to oxaloacetate. The polypeptide is Malate dehydrogenase (Halorhodospira halophila (strain DSM 244 / SL1) (Ectothiorhodospira halophila (strain DSM 244 / SL1))).